Here is a 67-residue protein sequence, read N- to C-terminus: uncharacterized protein (67 aa).

The next 2 helical transmembrane spans lie at 10–32 (NLSH…TAFI) and 44–66 (ATLT…MGQW).

Its subcellular location is the cell membrane. This is an uncharacterized protein from Archaeoglobus fulgidus (strain ATCC 49558 / DSM 4304 / JCM 9628 / NBRC 100126 / VC-16).